Reading from the N-terminus, the 210-residue chain is T-cell surface glycoprotein CD8 beta chain (210 aa).

The N-terminal stretch at 1-21 (MRPRLWLLLAAQLTVLHGNSV) is a signal peptide. The Ig-like V-type domain maps to 22–132 (LQQTPAYIKV…ELTFGKGTQL (111 aa)). Over 22–170 (LQQTPAYIKV…ETQKGPLCSP (149 aa)) the chain is Extracellular. Cys-41 and Cys-116 are disulfide-bonded. Asn-102 carries N-linked (GlcNAc...) asparagine glycosylation. The helical transmembrane segment at 171–191 (ITLGLLVAGVLVLLVSLGVAI) threads the bilayer. Residues 192–210 (HLCCRRRRARLRFMKQFYK) lie on the Cytoplasmic side of the membrane. Tyr-209 carries the post-translational modification Phosphotyrosine.

In terms of assembly, forms disulfide-linked heterodimers with CD8A at the cell surface. Interacts with CD3D; this interaction couples TCR-CD3 with CD8. Interacts with LCK. Phosphorylated as a consequence of T-cell activation. Post-translationally, palmitoylated at the cytoplasmic tail and thereby targets the heterodimer CD8A/CD8B to lipid rafts unlike CD8A homodimers. In terms of tissue distribution, isoform 1, isoform 3, isoform 5, isoform 6, isoform 7 and isoform 8 are expressed in both thymus and peripheral CD8+ T-cells. Expression of isoform 1 is higher in thymus CD8+ T-cells than in peripheral CD8+ T-cells. Expression of isoform 6 is higher in peripheral CD8+ T-cells than in thymus CD8+ T-cells.

The protein resides in the cell membrane. It localises to the secreted. Integral membrane glycoprotein that plays an essential role in the immune response and serves multiple functions in responses against both external and internal offenses. In T-cells, functions primarily as a coreceptor for MHC class I molecule:peptide complex. The antigens presented by class I peptides are derived from cytosolic proteins while class II derived from extracellular proteins. Interacts simultaneously with the T-cell receptor (TCR) and the MHC class I proteins presented by antigen presenting cells (APCs). In turn, recruits the Src kinase LCK to the vicinity of the TCR-CD3 complex. A palmitoylation site in the cytoplasmic tail of CD8B chain contributes to partitioning of CD8 into the plasma membrane lipid rafts where signaling proteins are enriched. Once LCK recruited, it initiates different intracellular signaling pathways by phosphorylating various substrates ultimately leading to lymphokine production, motility, adhesion and activation of cytotoxic T-lymphocytes (CTLs). Additionally, plays a critical role in thymic selection of CD8+ T-cells. This chain is T-cell surface glycoprotein CD8 beta chain (CD8B), found in Homo sapiens (Human).